A 122-amino-acid polypeptide reads, in one-letter code: Small ribosomal subunit protein uS13 (122 aa).

A disordered region spans residues S95 to K122.

Belongs to the universal ribosomal protein uS13 family. As to quaternary structure, part of the 30S ribosomal subunit. Forms a loose heterodimer with protein S19. Forms two bridges to the 50S subunit in the 70S ribosome.

Its function is as follows. Located at the top of the head of the 30S subunit, it contacts several helices of the 16S rRNA. In the 70S ribosome it contacts the 23S rRNA (bridge B1a) and protein L5 of the 50S subunit (bridge B1b), connecting the 2 subunits; these bridges are implicated in subunit movement. Contacts the tRNAs in the A and P-sites. The protein is Small ribosomal subunit protein uS13 of Mesorhizobium japonicum (strain LMG 29417 / CECT 9101 / MAFF 303099) (Mesorhizobium loti (strain MAFF 303099)).